The following is a 144-amino-acid chain: Large ribosomal subunit protein uL11 (144 aa).

The protein belongs to the universal ribosomal protein uL11 family. As to quaternary structure, part of the ribosomal stalk of the 50S ribosomal subunit. Interacts with L10 and the large rRNA to form the base of the stalk. L10 forms an elongated spine to which L12 dimers bind in a sequential fashion forming a multimeric L10(L12)X complex. Post-translationally, one or more lysine residues are methylated.

Functionally, forms part of the ribosomal stalk which helps the ribosome interact with GTP-bound translation factors. This chain is Large ribosomal subunit protein uL11, found in Polaromonas naphthalenivorans (strain CJ2).